The primary structure comprises 453 residues: Serine/threonine-protein phosphatase 2A 55 kDa regulatory subunit B delta isoform (453 aa).

WD repeat units follow at residues 32-71 (AEAD…KGRA), 97-138 (EIEE…KRAE), 181-219 (AHTY…RSFN), and 230-270 (ELTE…LCDR). Ser-285 is subject to Phosphoserine. WD repeat units lie at residues 289 to 327 (EIIS…RPVE), 344 to 385 (ENDC…DVTL), and 420 to 452 (DFNK…QDKI). The residue at position 305 (Tyr-305) is a Phosphotyrosine. At Thr-308 the chain carries Phosphothreonine. Positions 385 to 406 (LEASRENSKPRASLKPRKVCSG) are disordered.

It belongs to the phosphatase 2A regulatory subunit B family. In terms of assembly, PP2A consists of a common heterodimeric core enzyme, composed of a 36 kDa catalytic subunit (subunit C) and a 65 kDa constant regulatory subunit (PR65 or subunit A), that associates with a variety of regulatory subunits. Proteins that associate with the core dimer include three families of regulatory subunits B (the R2/B/PR55/B55, R3/B''/PR72/PR130/PR59 and R5/B'/B56 families), the 48 kDa variable regulatory subunit, viral proteins, and cell signaling molecules. Interacts with ENSA (when phosphorylated at 'Ser-67') and ARPP19 (when phosphorylated at 'Ser-62'), leading to inhibit PP2A activity. Interacts with IER5. Widely expressed with high levels in brain, heart, placenta, skeletal muscle, testis, thymus and spleen.

It localises to the cytoplasm. Substrate-recognition subunit of protein phosphatase 2A (PP2A) that plays a key role in cell cycle by controlling mitosis entry and exit. Involved in chromosome clustering during late mitosis by mediating dephosphorylation of MKI67. The activity of PP2A complexes containing PPP2R2D (PR55-delta) fluctuate during the cell cycle: the activity is high in interphase and low in mitosis. In Rattus norvegicus (Rat), this protein is Serine/threonine-protein phosphatase 2A 55 kDa regulatory subunit B delta isoform (Ppp2r2d).